Consider the following 177-residue polypeptide: Large ribosomal subunit protein uL6 (177 aa).

It belongs to the universal ribosomal protein uL6 family. Part of the 50S ribosomal subunit.

In terms of biological role, this protein binds to the 23S rRNA, and is important in its secondary structure. It is located near the subunit interface in the base of the L7/L12 stalk, and near the tRNA binding site of the peptidyltransferase center. This is Large ribosomal subunit protein uL6 from Bordetella pertussis (strain Tohama I / ATCC BAA-589 / NCTC 13251).